Consider the following 115-residue polypeptide: Nascent polypeptide-associated complex protein (115 aa).

Residues 6–72 (PMNPKQLKKL…SEEEKAIINI (67 aa)) enclose the NAC-A/B domain.

It belongs to the NAC-alpha family. Homodimer. Interacts with the ribosome. Binds ribosomal RNA.

In terms of biological role, contacts the emerging nascent chain on the ribosome. The sequence is that of Nascent polypeptide-associated complex protein from Pyrococcus horikoshii (strain ATCC 700860 / DSM 12428 / JCM 9974 / NBRC 100139 / OT-3).